Reading from the N-terminus, the 490-residue chain is Cytochrome P450 71A19 (490 aa).

Residues 3–23 (IILVTLCLTTLLALLLLKSIL) form a helical membrane-spanning segment. C433 contributes to the heme binding site.

Belongs to the cytochrome P450 family. The cofactor is heme.

The protein resides in the membrane. The polypeptide is Cytochrome P450 71A19 (CYP71A19) (Arabidopsis thaliana (Mouse-ear cress)).